Consider the following 91-residue polypeptide: Probable Fe(2+)-trafficking protein (91 aa).

The protein belongs to the Fe(2+)-trafficking protein family.

Its function is as follows. Could be a mediator in iron transactions between iron acquisition and iron-requiring processes, such as synthesis and/or repair of Fe-S clusters in biosynthetic enzymes. The polypeptide is Probable Fe(2+)-trafficking protein (Glaesserella parasuis serovar 5 (strain SH0165) (Haemophilus parasuis)).